A 444-amino-acid polypeptide reads, in one-letter code: C4-dicarboxylate transport protein 3 (444 aa).

The next 9 membrane-spanning stretches (helical) occupy residues 22 to 42 (VLYVQVLIAIVLGAIVGWLWP), 60 to 80 (LIKMVIAPIIFCTVVSGIAHI), 95 to 115 (VYFEVVSTFALVIGLIIGNLV), 162 to 182 (GEILQVLLFSVLFGFAIMSLG), 198 to 218 (AVFGVISIVMRAAPIGAFGAM), 236 to 256 (LIATFYVTAALFVFVVLGIIA), 321 to 341 (IYMTLATLFIAQALGFDLSFG), 346 to 366 (ILVVAMLTSKGASGITGAGFI), and 399 to 419 (LTNLCGNGVACVIVAWWEGEL).

It belongs to the dicarboxylate/amino acid:cation symporter (DAACS) (TC 2.A.23) family.

The protein localises to the cell inner membrane. Responsible for the transport of dicarboxylates such as succinate, fumarate, and malate from the periplasm across the membrane. The protein is C4-dicarboxylate transport protein 3 of Bradyrhizobium diazoefficiens (strain JCM 10833 / BCRC 13528 / IAM 13628 / NBRC 14792 / USDA 110).